Here is a 341-residue protein sequence, read N- to C-terminus: MNKKLIALAVAAASISSVATAAEVYSDETSSLAVGGRFEARAVLADVNKDENVTNTASSEVSDKSRVRINVAGKTDITEDFYGVGFFEKEFSSADSDNDETRYAYAGVGSQYGQLVYGKADGSLGMLTDFTDIMAYHGNEAGNKLAAADRTDNNLSYVGSFDLNGDNLTVKANYVFGGSDENEGYSAAAMYAMDMGLGFGAGYGEQDGQSSKNGNEDKTGKQAFGAISYTISDFYFSGLYQDSRNTVVNNDLIDESTGYEFAAAYTYGKAVFITTYNFLEDSNASGDASDLRDSIAIDGTYYFNKNFRTYASYKFNLLDANSSTTKAQASDEFVLGARYDF.

An N-terminal signal peptide occupies residues 1–21; the sequence is MNKKLIALAVAAASISSVATA.

The protein belongs to the Gram-negative porin family. As to quaternary structure, homotrimer.

Its subcellular location is the cell outer membrane. Its function is as follows. Forms pores that allow passive diffusion of small molecules across the outer membrane. The chain is Porin-like protein L (ompL) from Photobacterium profundum (strain SS9).